The sequence spans 213 residues: Thymidylate kinase (213 aa).

10 to 17 (GLEGAGKT) contributes to the ATP binding site.

Belongs to the thymidylate kinase family.

The enzyme catalyses dTMP + ATP = dTDP + ADP. In terms of biological role, phosphorylation of dTMP to form dTDP in both de novo and salvage pathways of dTTP synthesis. The polypeptide is Thymidylate kinase (Escherichia coli O6:K15:H31 (strain 536 / UPEC)).